The primary structure comprises 393 residues: Na(+)/H(+) antiporter NhaA 2 (393 aa).

11 helical membrane passes run 18 to 38 (SGGL…NSQL), 53 to 73 (LSVQ…MVGL), 91 to 111 (ILPG…YLAF), 120 to 140 (GWAI…SLLG), 149 to 169 (VFLA…IGLF), 172 to 192 (TGVS…LVAL), 208 to 228 (LVLW…GVLL), 263 to 283 (FIIV…GLGM), 294 to 314 (VAAG…LLLV), 332 to 352 (GTTL…LLAF), and 363 to 383 (IGIL…LRFS).

It belongs to the NhaA Na(+)/H(+) (TC 2.A.33) antiporter family.

The protein localises to the cell inner membrane. The catalysed reaction is Na(+)(in) + 2 H(+)(out) = Na(+)(out) + 2 H(+)(in). In terms of biological role, na(+)/H(+) antiporter that extrudes sodium in exchange for external protons. This is Na(+)/H(+) antiporter NhaA 2 from Brucella anthropi (strain ATCC 49188 / DSM 6882 / CCUG 24695 / JCM 21032 / LMG 3331 / NBRC 15819 / NCTC 12168 / Alc 37) (Ochrobactrum anthropi).